Here is a 421-residue protein sequence, read N- to C-terminus: L-Ala-D/L-amino acid epimerase (421 aa).

Residues T193 and 218-220 (KLK) each bind substrate. Residues D247, E275, and D304 each contribute to the Mg(2+) site. Substrate contacts are provided by residues K328 and 380 to 382 (DLD).

It belongs to the mandelate racemase/muconate lactonizing enzyme family. Mg(2+) serves as cofactor.

Its function is as follows. Catalyzes the epimerization of various hydrophobic and polar dipeptides. Has epimerase activity with L-Ala-L-Ala, L-Ala-L-Ser, L-Ala-L-Thr and L-Ala-L-Trp (in vitro). This chain is L-Ala-D/L-amino acid epimerase, found in Populus trichocarpa (Western balsam poplar).